A 274-amino-acid polypeptide reads, in one-letter code: Orotidine 5'-phosphate decarboxylase (274 aa).

Residues Asp40, 62 to 64 (KTH), 93 to 102 (DRKFVDIGNT), Tyr227, and Arg245 contribute to the substrate site. The active-site Proton donor is the Lys95.

Belongs to the OMP decarboxylase family.

The catalysed reaction is orotidine 5'-phosphate + H(+) = UMP + CO2. It participates in pyrimidine metabolism; UMP biosynthesis via de novo pathway; UMP from orotate: step 2/2. The polypeptide is Orotidine 5'-phosphate decarboxylase (URA3) (Coccidioides posadasii (strain RMSCC 757 / Silveira) (Valley fever fungus)).